The following is a 232-amino-acid chain: MGKVAVNSPAHRPLVSTAVYLAPSVKFPLQKRGLGTIYTPPLARLIEQLQRLPSVGPKTAQRLALHLLKRPDAEVENLAQALLDAKKRVGQCQVCFHLSAEPVCDICRHPQRDNSVICVVSDPRDVIALEKTREFRGKYHVLGGVISPMDGIGPEQLTIQPLLHRVSQPEIKEVILAISPSVEGETTTLYLGKLLQPFTKVTRIAFGLPMGGDLEYADEVTLARALEGRREL.

The C4-type zinc-finger motif lies at 92–107 (CQVCFHLSAEPVCDIC). Positions 115 to 209 (SVICVVSDPR…KVTRIAFGLP (95 aa)) constitute a Toprim domain.

The protein belongs to the RecR family.

Functionally, may play a role in DNA repair. It seems to be involved in an RecBC-independent recombinational process of DNA repair. It may act with RecF and RecO. In Synechocystis sp. (strain ATCC 27184 / PCC 6803 / Kazusa), this protein is Recombination protein RecR.